We begin with the raw amino-acid sequence, 468 residues long: Methionine aminopeptidase 2 (468 aa).

Residues 1 to 10 (MGSKTFEGEG) are compositionally biased toward basic and acidic residues. The disordered stretch occupies residues 1–106 (MGSKTFEGEG…PPRVPLDDLF (106 aa)). Positions 16–25 (DPSNSTSPNS) are enriched in polar residues. Residues 31–40 (RGAHLSRDGD) are compositionally biased toward basic and acidic residues. Over residues 46–56 (GDGDDGADGDE) the composition is skewed to acidic residues. Polar residues predominate over residues 61 to 75 (VTTTPLTEQQPSSET). A compositionally biased stretch (basic residues) spans 78-90 (KKKKRRKPKKKIS). His219 is a binding site for substrate. 3 residues coordinate a divalent metal cation: Asp240, Asp251, and His320. His328 serves as a coordination point for substrate. A divalent metal cation contacts are provided by Glu353 and Glu449.

This sequence belongs to the peptidase M24A family. Methionine aminopeptidase eukaryotic type 2 subfamily. Requires Co(2+) as cofactor. Zn(2+) is required as a cofactor. The cofactor is Mn(2+). Fe(2+) serves as cofactor.

The protein localises to the cytoplasm. It carries out the reaction Release of N-terminal amino acids, preferentially methionine, from peptides and arylamides.. Its function is as follows. Cotranslationally removes the N-terminal methionine from nascent proteins. The N-terminal methionine is often cleaved when the second residue in the primary sequence is small and uncharged (Met-Ala-, Cys, Gly, Pro, Ser, Thr, or Val). The protein is Methionine aminopeptidase 2 of Aspergillus oryzae (strain ATCC 42149 / RIB 40) (Yellow koji mold).